Reading from the N-terminus, the 708-residue chain is Double-strand break repair protein MRE11 (708 aa).

Residue serine 2 is modified to N-acetylserine. Position 2 is a phosphoserine (serine 2). 3 residues coordinate Mn(2+): aspartate 20, histidine 22, and aspartate 60. Residues 87–117 form an interaction with NBN region; it reads RPVQFEILSDQSVNFGFSKFPWVNYQDGNLN. Asparagine 128 is a Mn(2+) binding site. Histidine 129 acts as the Proton donor in catalysis. Positions 217, 245, and 247 each coordinate Mn(2+). A Glycyl lysine isopeptide (Lys-Gly) (interchain with G-Cter in SUMO2) cross-link involves residue lysine 255. Position 275 is a phosphoserine (serine 275). Lysine 282 participates in a covalent cross-link: Glycyl lysine isopeptide (Lys-Gly) (interchain with G-Cter in UFM1). A Glycyl lysine isopeptide (Lys-Gly) (interchain with G-Cter in ubiquitin) cross-link involves residue lysine 339. Lysine 384 is covalently cross-linked (Glycyl lysine isopeptide (Lys-Gly) (interchain with G-Cter in SUMO)). Lysine 416 is covalently cross-linked (Glycyl lysine isopeptide (Lys-Gly) (interchain with G-Cter in SUMO2)). A Glycyl lysine isopeptide (Lys-Gly) (interchain with G-Cter in SUMO) cross-link involves residue lysine 467. Lysine 480 participates in a covalent cross-link: Glycyl lysine isopeptide (Lys-Gly) (interchain with G-Cter in ubiquitin). Disordered stretches follow at residues 507–540 and 556–614; these read TRQKNTNEEDDEVREAMTRARALRSQSEESASAF and NDSD…AVSA. Residues 569–579 show a composition bias toward basic residues; that stretch reads GRGRGRGRRGG. Asymmetric dimethylarginine is present on residues arginine 570, arginine 572, arginine 574, arginine 576, arginine 577, arginine 580, arginine 587, arginine 592, and arginine 594. Positions 570–594 match the GAR motif; sequence RGRGRGRRGGRGQNSASRGGSQRGR. Residues 599 to 614 are compositionally biased toward polar residues; the sequence is LETSTRSRNSKTAVSA. Serine 619 carries the post-translational modification Phosphoserine. Residue lysine 625 forms a Glycyl lysine isopeptide (Lys-Gly) (interchain with G-Cter in SUMO2) linkage. Residue serine 641 is modified to Phosphoserine. Serine 649 is modified (phosphoserine; by PLK1). A disordered region spans residues 651-708; that stretch reads VEEDIFPTTSKTDQRWSSTSSSKIMSQSQVSKGVDFESSEDDDDDPFMNTSSLRRNRR. The segment covering 667-681 has biased composition (low complexity); sequence SSTSSSKIMSQSQVS. An N6-lactoyllysine modification is found at lysine 673. Phosphoserine; by ATM occurs at positions 676 and 678. Positions 687–696 are enriched in acidic residues; that stretch reads ESSEDDDDDP. Serine 688 carries the phosphoserine; by CDK2 modification. A phosphoserine mark is found at serine 689 and serine 701. The segment covering 698–708 has biased composition (polar residues); it reads MNTSSLRRNRR.

It belongs to the MRE11/RAD32 family. Component of the MRN complex composed of two heterodimers RAD50 and MRE11 associated with a single NBN. The MRN complexes dimerize on DNA to form joined MRN-MRN oligomers required for DNA double-strand break repair. As part of the MRN complex, interacts with MCM9; the interaction recruits the complex to DNA repair sites. Component of the BASC complex, at least composed of BRCA1, MSH2, MSH6, MLH1, ATM, BLM, RAD50, MRE11 and NBN. Found in a complex with TERF2. Interacts with DCLRE1C/Artemis and DCLRE1B/Apollo. Interacts with ATF2. Interacts with EXD2. Interacts with MRNIP. Interacts with SAMHD1; leading to stimulate 3'-5' exonuclease activity. Interacts (when ubiquitinated) with UBQLN4 (via its UBA domain). Interacts with CYREN (via XLF motif). Interacts with GFI1; promoting methylation by PRMT1. Interacts with DYNLL1; inhibiting the activity of MRE11. Interacts with C1QBP and RAD50; interaction takes place in absence of DNA damage to form the MRC (MRE11-RAD50-C1QBP) complex that inhibits the activity of MRE11. Interacts with AGER/RAGE. AGER is recruited to DNA double-strand break sites where it enhances MRE11 endonuclease activity to promote DNA repair. In terms of assembly, (Microbial infection) Interacts with herpes simplex virus 1 protein UL12. Mn(2+) serves as cofactor. In terms of processing, phosphorylated by ATM at Ser-676 and Ser-678 in response to DNA damage, promoting MRE11 activity: phosphorylation activates MRE11 by preventing the interaction between MRE11 and the C1QBP inhibitor. Phosphorylation at Ser-649 by PLK1 primes for phosphorylation at Ser-688 by CK2, inhibiting recruitment of the MRN complex to DNA damage sites. Asymmetric dimethylation by PRMT1 promotes MRE11 exonuclease activity. Post-translationally, lactylation at Lys-673 by CREBBP/CBP in response to DNA damage promotes DNA binding and MRE11 activity. In terms of processing, acetylated on lysine residues by KAT2A /GCN5. Ubiquitinated following DNA damage. Ubiquitination triggers interaction with UBQLN4, leading to MRE11 removal from chromatin and degradation by the proteasome. Ubiquitinated at Lys-339 and Lys-480 by RNF126 via 'Lys-27'- and 'Lys-29'-linked polyubiquitin chains, promoting the exonuclease activity of MRE11. Post-translationally, SUMOylated by PIAS1, stabilizing MRE11 on chromatin during end resection. DeSUMOylated by SENP3 following removal from DNA double-strand breaks (DSBs). In terms of processing, ufmylation at Lys-282 promotes MRE11 activity and is required for activation of the ATM and ATR kinases by the MRN complex. (Microbial infection) Following infection by adenovirus E4, ubiquitinated and degraded by a SCF-like E3 ubiquitin ligase complex containing viral proteins E1B-55K and E4-ORF6.

It is found in the nucleus. Its subcellular location is the chromosome. The protein resides in the telomere. Its activity is regulated as follows. Interaction with SAMHD1 stimulates the double-strand-specific 3'-5' exonuclease activity. RBBP8/CtIP specifically promotes the endonuclease activity to clear protein-DNA adducts and generate clean double-strand break ends. DYNLL1-binding inhibits the activity of MRE11. MRE11 activity is inhibited by C1QBP: in absence of DNA damage, C1QBP interacts with unphosphorylated MRE11, preventing formation and activity of the MRN complex. The mirin-derivative PFM39, specifically inhibits the 3'-5' exonuclease activity. The N-alkylated mirin-derivatives PFM03 and PFM01 specifically inhibit the endonuclease activity. Core component of the MRN complex, which plays a central role in double-strand break (DSB) repair, DNA recombination, maintenance of telomere integrity and meiosis. The MRN complex is involved in the repair of DNA double-strand breaks (DSBs) via homologous recombination (HR), an error-free mechanism which primarily occurs during S and G2 phases. The complex (1) mediates the end resection of damaged DNA, which generates proper single-stranded DNA, a key initial steps in HR, and is (2) required for the recruitment of other repair factors and efficient activation of ATM and ATR upon DNA damage. Within the MRN complex, MRE11 possesses both single-strand endonuclease activity and double-strand-specific 3'-5' exonuclease activity. After DSBs, MRE11 is loaded onto DSBs sites and cleaves DNA by cooperating with RBBP8/CtIP to initiate end resection. MRE11 first endonucleolytically cleaves the 5' strand at DNA DSB ends to prevent non-homologous end joining (NHEJ) and licence HR. It then generates a single-stranded DNA gap via 3' to 5' exonucleolytic degradation to create entry sites for EXO1- and DNA2-mediated 5' to 3' long-range resection, which is required for single-strand invasion and recombination. RBBP8/CtIP specifically promotes the endonuclease activity of MRE11 to clear protein-DNA adducts and generate clean double-strand break ends. MRE11 endonuclease activity is also enhanced by AGER/RAGE. The MRN complex is also required for DNA damage signaling via activation of the ATM and ATR kinases: the nuclease activity of MRE11 is not required to activate ATM and ATR. The MRN complex is also required for the processing of R-loops. The MRN complex is involved in the activation of the cGAS-STING pathway induced by DNA damage during tumorigenesis: the MRN complex acts by displacing CGAS from nucleosome sequestration, thereby activating it. In telomeres the MRN complex may modulate t-loop formation. In terms of biological role, MRE11 contains two DNA-binding domains (DBDs), enabling it to bind both single-stranded DNA (ssDNA) and double-stranded DNA (dsDNA). In Homo sapiens (Human), this protein is Double-strand break repair protein MRE11.